Consider the following 165-residue polypeptide: Cyclic pyranopterin monophosphate synthase (165 aa).

Substrate is bound by residues 76-78 (LCH) and 119-120 (ME). Aspartate 134 is an active-site residue.

The protein belongs to the MoaC family. Homohexamer; trimer of dimers.

It carries out the reaction (8S)-3',8-cyclo-7,8-dihydroguanosine 5'-triphosphate = cyclic pyranopterin phosphate + diphosphate. It functions in the pathway cofactor biosynthesis; molybdopterin biosynthesis. In terms of biological role, catalyzes the conversion of (8S)-3',8-cyclo-7,8-dihydroguanosine 5'-triphosphate to cyclic pyranopterin monophosphate (cPMP). This Photobacterium profundum (strain SS9) protein is Cyclic pyranopterin monophosphate synthase.